The following is a 916-amino-acid chain: RNA-directed DNA polymerase from mobile element jockey (916 aa).

The 275-residue stretch at 483–757 (SVLDVGYFPK…QAYKYLGITL (275 aa)) folds into the Reverse transcriptase domain.

Mg(2+) is required as a cofactor. It depends on Mn(2+) as a cofactor.

The enzyme catalyses DNA(n) + a 2'-deoxyribonucleoside 5'-triphosphate = DNA(n+1) + diphosphate. Its activity is regulated as follows. Inactivated by sulphydryl reagent. In Drosophila melanogaster (Fruit fly), this protein is RNA-directed DNA polymerase from mobile element jockey (pol).